Here is a 504-residue protein sequence, read N- to C-terminus: ATP synthase subunit alpha 2 (504 aa).

Residue 169-176 (GDRQTGKT) participates in ATP binding.

It belongs to the ATPase alpha/beta chains family. F-type ATPases have 2 components, CF(1) - the catalytic core - and CF(0) - the membrane proton channel. CF(1) has five subunits: alpha(3), beta(3), gamma(1), delta(1), epsilon(1). CF(0) has three main subunits: a(1), b(2) and c(9-12). The alpha and beta chains form an alternating ring which encloses part of the gamma chain. CF(1) is attached to CF(0) by a central stalk formed by the gamma and epsilon chains, while a peripheral stalk is formed by the delta and b chains.

It localises to the cell membrane. The catalysed reaction is ATP + H2O + 4 H(+)(in) = ADP + phosphate + 5 H(+)(out). Functionally, produces ATP from ADP in the presence of a proton gradient across the membrane. The alpha chain is a regulatory subunit. The polypeptide is ATP synthase subunit alpha 2 (Listeria innocua serovar 6a (strain ATCC BAA-680 / CLIP 11262)).